The primary structure comprises 202 residues: Casparian strip membrane protein 4 (202 aa).

Residues 1–40 (MKSDSIAVDVPAESSSAIKGKAPLLGLARDHTGSGGYKRG) are Cytoplasmic-facing. A helical transmembrane segment spans residues 41–61 (LSIFDFLLRLAAIVAALAAAA). The Extracellular portion of the chain corresponds to 62–90 (TMGTSDETLPFFTQFLQFEASYDDLPTFQ). Residues 91–111 (FFVVAIAIVTGYLVLSLPFSV) form a helical membrane-spanning segment. The Cytoplasmic portion of the chain corresponds to 112–130 (VTIVRPLAVAPRLLLLVLD). The helical transmembrane segment at 131–151 (TAALALDTAAASAAAAIVYLA) threads the bilayer. Topologically, residues 152–176 (HNGNTNTNWLPICQQFGDFCQKTSG) are extracellular. A helical transmembrane segment spans residues 177–197 (AVVSAFASVTFLAILVVISGV). Residues 198–202 (SLKRP) are Cytoplasmic-facing.

It belongs to the Casparian strip membrane proteins (CASP) family. As to quaternary structure, homodimer and heterodimers.

It is found in the cell membrane. Regulates membrane-cell wall junctions and localized cell wall deposition. Required for establishment of the Casparian strip membrane domain (CSD) and the subsequent formation of Casparian strips, a cell wall modification of the root endodermis that determines an apoplastic barrier between the intraorganismal apoplasm and the extraorganismal apoplasm and prevents lateral diffusion. The sequence is that of Casparian strip membrane protein 4 from Arabidopsis lyrata subsp. lyrata (Lyre-leaved rock-cress).